A 251-amino-acid chain; its full sequence is Segregation and condensation protein A (251 aa).

It belongs to the ScpA family. Component of a cohesin-like complex composed of ScpA, ScpB and the Smc homodimer, in which ScpA and ScpB bind to the head domain of Smc. The presence of the three proteins is required for the association of the complex with DNA.

The protein localises to the cytoplasm. Functionally, participates in chromosomal partition during cell division. May act via the formation of a condensin-like complex containing Smc and ScpB that pull DNA away from mid-cell into both cell halves. This Exiguobacterium sibiricum (strain DSM 17290 / CCUG 55495 / CIP 109462 / JCM 13490 / 255-15) protein is Segregation and condensation protein A.